The sequence spans 355 residues: Nuclear speckle splicing regulatory protein 1 homolog (355 aa).

The disordered stretch occupies residues 1-57 (MSGTGFRYGLNVMKKKKPNESSNRITFTEDDSSSSEQEHAPIPNSFSSQITAASDAS). A compositionally biased stretch (polar residues) spans 44-54 (NSFSSQITAAS). The stretch at 99 to 162 (MENLIESAKK…EDRKEEDEKS (64 aa)) forms a coiled coil. Disordered regions lie at residues 253 to 292 (SANN…HGTY) and 325 to 355 (KIHA…ATNP). Residues 280–289 (YHQDRPDKRH) show a composition bias toward basic and acidic residues. Residues 293-326 (SLEEIDKQRKEFENRQRLQKEKEFQKSREAALKI) are a coiled coil. Residues 329–339 (SRNTTETQVQS) are compositionally biased toward polar residues. The span at 346–355 (QRKKKAATNP) shows a compositional bias: basic residues.

This sequence belongs to the NSRP1 family.

This Schizosaccharomyces pombe (strain 972 / ATCC 24843) (Fission yeast) protein is Nuclear speckle splicing regulatory protein 1 homolog.